The chain runs to 214 residues: Large ribosomal subunit protein uL4 (214 aa).

Positions Thr56–Lys86 are disordered. Basic residues predominate over residues Lys71–Ser85.

The protein belongs to the universal ribosomal protein uL4 family. In terms of assembly, part of the 50S ribosomal subunit.

Functionally, one of the primary rRNA binding proteins, this protein initially binds near the 5'-end of the 23S rRNA. It is important during the early stages of 50S assembly. It makes multiple contacts with different domains of the 23S rRNA in the assembled 50S subunit and ribosome. Its function is as follows. Forms part of the polypeptide exit tunnel. The polypeptide is Large ribosomal subunit protein uL4 (Mesomycoplasma hyopneumoniae (strain 232) (Mycoplasma hyopneumoniae)).